We begin with the raw amino-acid sequence, 615 residues long: MILDKVNSPEDLKRLSLEELLLLAEEIRSEIIRVTAQNGGHLASSLGAVELVLALHRVFDSPRDRILFDVGHQAYAHKLVTGRKDRFHTLRKEGGISGFTKVSESPHDAITAGHASTSLANALGMVLARDLMGEDYHVVAVIGDGALTGGMALAALNKIGELQKRMLIVLNDNEMSISENVGALNKYFKELQIRKWVQDAEKLGKNILERISPQLFGLVDRAKEAAKFLLHQENPFYAWGIRYVGPVDGHDLKGLVHILEHLKALDGPTLLHVVTKKGKGYKVAEADPIYWHGPPGFDPKKPEKVSKGYTWSQAFGDAVTELAHMEPRLFVLTPAMREGSGLVRYSLEHPERYLDVGICEDVAVTTAAGLALRGMKPIVAIYSTFLQRAYDQVIHDVAIENLPVVFAIDRAGIVGADGATHHGVFDIAYLRTVPNLQIAAPKDALELRAMLKKALEVGGPVAIRYPRDNVERAPEGVWPEIAWGKWEVLKEGTEAYILAFGKTLRYALEAAGDDPRVGVVNARFLKPLDREMLRELSRYKLLTVEDHQKMGGFGSAVLEALNEMGLKPEVQILGLPDRFFEHGAIPSLHRQAGIDAEGIRKALAAMGVALVHERA.

Thiamine diphosphate-binding positions include His72 and 113 to 115 (GHA). Residue Asp144 coordinates Mg(2+). Residues 145–146 (GA), Asn173, Tyr281, and Glu360 each bind thiamine diphosphate. Asn173 contacts Mg(2+).

This sequence belongs to the transketolase family. DXPS subfamily. Homodimer. It depends on Mg(2+) as a cofactor. Requires thiamine diphosphate as cofactor.

The enzyme catalyses D-glyceraldehyde 3-phosphate + pyruvate + H(+) = 1-deoxy-D-xylulose 5-phosphate + CO2. It participates in metabolic intermediate biosynthesis; 1-deoxy-D-xylulose 5-phosphate biosynthesis; 1-deoxy-D-xylulose 5-phosphate from D-glyceraldehyde 3-phosphate and pyruvate: step 1/1. Catalyzes the acyloin condensation reaction between C atoms 2 and 3 of pyruvate and glyceraldehyde 3-phosphate to yield 1-deoxy-D-xylulose-5-phosphate (DXP). This chain is 1-deoxy-D-xylulose-5-phosphate synthase, found in Thermus thermophilus (strain ATCC 27634 / DSM 579 / HB8).